The chain runs to 437 residues: Enolase (437 aa).

A (2R)-2-phosphoglycerate-binding site is contributed by Gln-162. The active-site Proton donor is the Glu-204. Mg(2+)-binding residues include Asp-251, Glu-297, and Asp-324. 4 residues coordinate (2R)-2-phosphoglycerate: Lys-349, Arg-378, Ser-379, and Lys-400. The active-site Proton acceptor is the Lys-349.

Belongs to the enolase family. It depends on Mg(2+) as a cofactor.

Its subcellular location is the cytoplasm. The protein localises to the secreted. It localises to the cell surface. It catalyses the reaction (2R)-2-phosphoglycerate = phosphoenolpyruvate + H2O. Its pathway is carbohydrate degradation; glycolysis; pyruvate from D-glyceraldehyde 3-phosphate: step 4/5. Catalyzes the reversible conversion of 2-phosphoglycerate (2-PG) into phosphoenolpyruvate (PEP). It is essential for the degradation of carbohydrates via glycolysis. In Chlorobium chlorochromatii (strain CaD3), this protein is Enolase.